We begin with the raw amino-acid sequence, 307 residues long: Homoserine kinase (307 aa).

92-102 contributes to the ATP binding site; that stretch reads PLARGLGSSAT.

The protein belongs to the GHMP kinase family. Homoserine kinase subfamily.

The protein resides in the cytoplasm. It catalyses the reaction L-homoserine + ATP = O-phospho-L-homoserine + ADP + H(+). Its pathway is amino-acid biosynthesis; L-threonine biosynthesis; L-threonine from L-aspartate: step 4/5. In terms of biological role, catalyzes the ATP-dependent phosphorylation of L-homoserine to L-homoserine phosphate. The chain is Homoserine kinase (thrB) from Microchaete diplosiphon (Fremyella diplosiphon).